Reading from the N-terminus, the 194-residue chain is Thymidine kinase (194 aa).

ATP-binding positions include Gly15–Ser22 and Asp88–Gln91. Residue Glu89 is the Proton acceptor of the active site. Zn(2+) is bound by residues Cys145, Cys148, Cys183, and Cys186.

It belongs to the thymidine kinase family. In terms of assembly, homotetramer.

It localises to the cytoplasm. The catalysed reaction is thymidine + ATP = dTMP + ADP + H(+). The sequence is that of Thymidine kinase from Bacillus anthracis (strain A0248).